A 176-amino-acid polypeptide reads, in one-letter code: Vitamin K epoxide reductase complex subunit 1-like protein 1 (176 aa).

At 1 to 13 (MAAPVLLRVSVPR) the chain is on the cytoplasmic side. Residues 14–36 (WERVARYAVCAAGILLSIYAYHV) traverse the membrane as a helical segment. Over 37 to 87 (EREKERDPEHRALCDLGPWVKCSAALASRWGRGFGLLGSIFGKDGVLNQPN) the chain is Lumenal. Residues cysteine 50 and cysteine 58 are joined by a disulfide bond. A (S)-warfarin-binding site is contributed by asparagine 87. The helical transmembrane segment at 88-102 (SVFGLIFYILQLLLG) threads the bilayer. At 103–107 (MTASA) the chain is on the cytoplasmic side. Residues 108–135 (VAALILMTSSIMSVVGSLYLAYILYFVL) form a helical membrane-spanning segment. Topologically, residues 136–138 (KEF) are lumenal. Cysteine 139 and cysteine 142 are disulfide-bonded. The chain crosses the membrane as a helical span at residues 139–160 (CIICIVTYVLNFLLLIINYKRL). The phylloquinone site is built by cysteine 142 and tyrosine 146. Tyrosine 146 provides a ligand contact to (S)-warfarin. Residues 161–176 (VYLNEAWKRQLQPKQD) are Cytoplasmic-facing.

This sequence belongs to the VKOR family.

The protein resides in the endoplasmic reticulum membrane. The catalysed reaction is phylloquinone + [protein]-disulfide + H2O = 2,3-epoxyphylloquinone + [protein]-dithiol. It catalyses the reaction phylloquinol + [protein]-disulfide = phylloquinone + [protein]-dithiol. Inhibited by warfarin (coumadin). Warfarin locks VKORC1 in both redox states into the closed conformation. In terms of biological role, involved in vitamin K metabolism. Can reduce inactive vitamin K 2,3-epoxide to active vitamin K, and may contribute to vitamin K-mediated protection against oxidative stress. Plays a role in vitamin K-dependent gamma-carboxylation of Glu residues in target proteins. In Homo sapiens (Human), this protein is Vitamin K epoxide reductase complex subunit 1-like protein 1 (VKORC1L1).